The following is a 484-amino-acid chain: ATP synthase subunit beta (484 aa).

162–169 (GGAGVGKT) lines the ATP pocket.

This sequence belongs to the ATPase alpha/beta chains family. F-type ATPases have 2 components, CF(1) - the catalytic core - and CF(0) - the membrane proton channel. CF(1) has five subunits: alpha(3), beta(3), gamma(1), delta(1), epsilon(1). CF(0) has four main subunits: a(1), b(1), b'(1) and c(9-12).

The protein localises to the cellular thylakoid membrane. The enzyme catalyses ATP + H2O + 4 H(+)(in) = ADP + phosphate + 5 H(+)(out). Functionally, produces ATP from ADP in the presence of a proton gradient across the membrane. The catalytic sites are hosted primarily by the beta subunits. This Synechococcus elongatus (strain ATCC 33912 / PCC 7942 / FACHB-805) (Anacystis nidulans R2) protein is ATP synthase subunit beta.